The primary structure comprises 1040 residues: Multidrug resistance protein MdtB (1040 aa).

Helical transmembrane passes span 16 to 36, 342 to 362, 369 to 389, 396 to 416, 440 to 460, 472 to 492, 537 to 557, 863 to 883, 888 to 908, 911 to 931, 968 to 988, and 998 to 1018; these read FIMR…AGII, DTQF…YLFL, IIPG…MVFL, LTLM…IVVI, IGFT…PLLF, FAVT…TLTP, WLTL…WVFI, LGST…VLGV, FIHP…ALLA, LAGS…IGIV, ILMT…STGV, and IGMV…TPVI.

This sequence belongs to the resistance-nodulation-cell division (RND) (TC 2.A.6) family. MdtB subfamily. As to quaternary structure, part of a tripartite efflux system composed of MdtA, MdtB and MdtC. MdtB forms a heteromultimer with MdtC.

It is found in the cell inner membrane. The polypeptide is Multidrug resistance protein MdtB (Klebsiella pneumoniae (strain 342)).